A 156-amino-acid chain; its full sequence is Arginine repressor (156 aa).

It belongs to the ArgR family.

It is found in the cytoplasm. It functions in the pathway amino-acid biosynthesis; L-arginine biosynthesis [regulation]. Functionally, regulates arginine biosynthesis genes. This chain is Arginine repressor, found in Citrobacter koseri (strain ATCC BAA-895 / CDC 4225-83 / SGSC4696).